A 485-amino-acid chain; its full sequence is Glutamyl-tRNA(Gln) amidotransferase subunit A (485 aa).

Residues lysine 78 and serine 153 each act as charge relay system in the active site. Serine 177 functions as the Acyl-ester intermediate in the catalytic mechanism.

The protein belongs to the amidase family. GatA subfamily. In terms of assembly, heterotrimer of A, B and C subunits.

The enzyme catalyses L-glutamyl-tRNA(Gln) + L-glutamine + ATP + H2O = L-glutaminyl-tRNA(Gln) + L-glutamate + ADP + phosphate + H(+). In terms of biological role, allows the formation of correctly charged Gln-tRNA(Gln) through the transamidation of misacylated Glu-tRNA(Gln) in organisms which lack glutaminyl-tRNA synthetase. The reaction takes place in the presence of glutamine and ATP through an activated gamma-phospho-Glu-tRNA(Gln). This is Glutamyl-tRNA(Gln) amidotransferase subunit A from Bacillus cereus (strain ZK / E33L).